The primary structure comprises 448 residues: Homogentisate 1,2-dioxygenase (448 aa).

The Proton acceptor role is filled by H303. 2 residues coordinate Fe cation: H346 and E352. Residues Y361 and H382 each contribute to the homogentisate site. H382 serves as a coordination point for Fe cation.

This sequence belongs to the homogentisate dioxygenase family. Hexamer; dimer of trimers. Fe cation serves as cofactor.

It carries out the reaction homogentisate + O2 = 4-maleylacetoacetate + H(+). It functions in the pathway amino-acid degradation; L-phenylalanine degradation; acetoacetate and fumarate from L-phenylalanine: step 4/6. Involved in the catabolism of homogentisate (2,5-dihydroxyphenylacetate or 2,5-OH-PhAc), a central intermediate in the degradation of phenylalanine and tyrosine. Catalyzes the oxidative ring cleavage of the aromatic ring of homogentisate to yield maleylacetoacetate. This Rhodopseudomonas palustris (strain HaA2) protein is Homogentisate 1,2-dioxygenase.